Reading from the N-terminus, the 226-residue chain is Histidine biosynthesis bifunctional protein HisIE (226 aa).

The segment at 1 to 131 (MMPMNQEFIQ…STFNRPLSNT (131 aa)) is phosphoribosyl-AMP cyclohydrolase. The segment at 132–226 (CSELFEVIKD…KRRQSKSNPK (95 aa)) is phosphoribosyl-ATP pyrophosphohydrolase.

It in the N-terminal section; belongs to the PRA-CH family. This sequence in the C-terminal section; belongs to the PRA-PH family.

The protein resides in the cytoplasm. It catalyses the reaction 1-(5-phospho-beta-D-ribosyl)-ATP + H2O = 1-(5-phospho-beta-D-ribosyl)-5'-AMP + diphosphate + H(+). The catalysed reaction is 1-(5-phospho-beta-D-ribosyl)-5'-AMP + H2O = 1-(5-phospho-beta-D-ribosyl)-5-[(5-phospho-beta-D-ribosylamino)methylideneamino]imidazole-4-carboxamide. It participates in amino-acid biosynthesis; L-histidine biosynthesis; L-histidine from 5-phospho-alpha-D-ribose 1-diphosphate: step 2/9. Its pathway is amino-acid biosynthesis; L-histidine biosynthesis; L-histidine from 5-phospho-alpha-D-ribose 1-diphosphate: step 3/9. This chain is Histidine biosynthesis bifunctional protein HisIE, found in Prochlorococcus marinus (strain SARG / CCMP1375 / SS120).